Consider the following 345-residue polypeptide: Ribosomal RNA small subunit methyltransferase H (345 aa).

S-adenosyl-L-methionine contacts are provided by residues Gly-47–Tyr-49, Asp-65, Phe-92, Asp-113, and Gln-120. The tract at residues Glu-296–Arg-345 is disordered.

The protein belongs to the methyltransferase superfamily. RsmH family.

The protein resides in the cytoplasm. The enzyme catalyses cytidine(1402) in 16S rRNA + S-adenosyl-L-methionine = N(4)-methylcytidine(1402) in 16S rRNA + S-adenosyl-L-homocysteine + H(+). Functionally, specifically methylates the N4 position of cytidine in position 1402 (C1402) of 16S rRNA. The chain is Ribosomal RNA small subunit methyltransferase H from Xanthobacter autotrophicus (strain ATCC BAA-1158 / Py2).